We begin with the raw amino-acid sequence, 160 residues long: Probable chemoreceptor glutamine deamidase CheD 2 (160 aa).

This sequence belongs to the CheD family.

The catalysed reaction is L-glutaminyl-[protein] + H2O = L-glutamyl-[protein] + NH4(+). Probably deamidates glutamine residues to glutamate on methyl-accepting chemotaxis receptors (MCPs), playing an important role in chemotaxis. In Geobacter sulfurreducens (strain ATCC 51573 / DSM 12127 / PCA), this protein is Probable chemoreceptor glutamine deamidase CheD 2.